Consider the following 156-residue polypeptide: Succinate dehydrogenase assembly factor 2-B, mitochondrial (156 aa).

Residues 1–24 (MLRQFIVSTVGRRLQLPMMAQSRL) constitute a mitochondrion transit peptide.

The protein belongs to the SDHAF2 family. As to quaternary structure, interacts with the flavoprotein subunit within the SDH catalytic dimer.

The protein resides in the mitochondrion matrix. In terms of biological role, plays an essential role in the assembly of succinate dehydrogenase (SDH), an enzyme complex (also referred to as respiratory complex II) that is a component of both the tricarboxylic acid (TCA) cycle and the mitochondrial electron transport chain, and which couples the oxidation of succinate to fumarate with the reduction of ubiquinone (coenzyme Q) to ubiquinol. Required for flavinylation (covalent attachment of FAD) of the flavoprotein subunit of the SDH catalytic dimer. This Drosophila simulans (Fruit fly) protein is Succinate dehydrogenase assembly factor 2-B, mitochondrial.